Here is a 445-residue protein sequence, read N- to C-terminus: Phosphoglucosamine mutase (445 aa).

Catalysis depends on serine 102, which acts as the Phosphoserine intermediate. Mg(2+) contacts are provided by serine 102, aspartate 241, aspartate 243, and aspartate 245. Serine 102 carries the post-translational modification Phosphoserine.

The protein belongs to the phosphohexose mutase family. It depends on Mg(2+) as a cofactor. In terms of processing, activated by phosphorylation.

The catalysed reaction is alpha-D-glucosamine 1-phosphate = D-glucosamine 6-phosphate. Functionally, catalyzes the conversion of glucosamine-6-phosphate to glucosamine-1-phosphate. The protein is Phosphoglucosamine mutase of Serratia proteamaculans (strain 568).